The sequence spans 181 residues: Large ribosomal subunit protein uL5 (181 aa).

The protein belongs to the universal ribosomal protein uL5 family. In terms of assembly, part of the 50S ribosomal subunit; part of the 5S rRNA/L5/L18/L25 subcomplex. Contacts the 5S rRNA and the P site tRNA. Forms a bridge to the 30S subunit in the 70S ribosome.

This is one of the proteins that bind and probably mediate the attachment of the 5S RNA into the large ribosomal subunit, where it forms part of the central protuberance. In the 70S ribosome it contacts protein S13 of the 30S subunit (bridge B1b), connecting the 2 subunits; this bridge is implicated in subunit movement. Contacts the P site tRNA; the 5S rRNA and some of its associated proteins might help stabilize positioning of ribosome-bound tRNAs. This is Large ribosomal subunit protein uL5 from Campylobacter hominis (strain ATCC BAA-381 / DSM 21671 / CCUG 45161 / LMG 19568 / NCTC 13146 / CH001A).